We begin with the raw amino-acid sequence, 198 residues long: Dermorphin-2 (198 aa).

Positions 1-20 are cleaved as a signal peptide; sequence MSFLKKSLLLILFLGLVSLS. A propeptide spanning residues 21–45 is cleaved from the precursor; it reads VCKEEKRVSEEENENEENHEEGSEM. The interval 24-198 is disordered; that stretch reads EEKRVSEEEN…AFGYPSGEAK (175 aa). Position 49 is a D-alanine (Ala) (Ala49). Serine amide is present on Ser54. Residues 56-65 show a composition bias toward basic and acidic residues; sequence EAKKIKRESE. A propeptide spanning residues 56–80 is cleaved from the precursor; the sequence is EAKKIKRESEEEKEIEENHEEGSEM. Ala84 is modified (D-alanine (Ala)). The residue at position 89 (Ser89) is a Serine amide. The propeptide occupies 91-115; that stretch reads EAKKIKRESEEENENEENHEEGSEM. Residues 100 to 109 show a composition bias toward acidic residues; the sequence is EEENENEENH. Ala119 carries the post-translational modification D-alanine (Ala). Residue Ser124 is modified to Serine amide. The segment covering 126 to 135 has biased composition (basic and acidic residues); it reads EAKKIKRESE. Residues 126–150 constitute a propeptide that is removed on maturation; it reads EAKKIKRESEEEKEIEENHEEGSEM. Residue Ala154 is modified to D-alanine (Ala). Serine amide is present on Ser159. The propeptide occupies 161 to 185; it reads EAKKIKRESEEENENEENHEEGSEM. Over residues 170-179 the composition is skewed to acidic residues; that stretch reads EEENENEENH. Ala189 is subject to D-alanine (Ala). The residue at position 194 (Ser194) is a Serine amide. Residues 196–198 constitute a propeptide that is removed on maturation; that stretch reads EAK.

The protein belongs to the frog skin active peptide (FSAP) family. Dermorphin subfamily. In terms of tissue distribution, expressed by the skin glands.

The protein localises to the secreted. Its function is as follows. Dermorphin has a very potent opiate-like activity. It has high affinity and selectivity for mu-type opioid receptors. The chain is Dermorphin-2 from Phyllomedusa sauvagei (Sauvage's leaf frog).